The chain runs to 344 residues: MITERQSNILNLIVDLFTQTHEPVGSKALQSLIASSSATIRNDMAKLEKLGLLEKAHTSSGRMPSAAGFKYFVEHSLNLGSIDEQDLYQLVKAFDFEAFKLEDVLLRASQMLSDTTGYTAAILDVEPARQRLTGFDIVQLSSHDALAVLTLDESKPLTVQFAIPKNFMNRDLLVLKGIVADRLLGKDVMTVHYKLRTEIPQIVQKYFTVTDNVLDLFDYIFVGLFRETIFVSGKVAALDYAGLATYQFLDEEQRLALSIRQSLSEEEMATVQVADSSEPALANVTLLTYKFLIPYRGFGLLSLIGPVDMDYRRSVSLINVIGQLLAVKLRDYYRYLNSNHYEVH.

This sequence belongs to the HrcA family.

Its function is as follows. Negative regulator of class I heat shock genes (grpE-dnaK-dnaJ and groELS operons). Prevents heat-shock induction of these operons. The polypeptide is Heat-inducible transcription repressor HrcA (Streptococcus equi subsp. zooepidemicus (strain H70)).